The chain runs to 757 residues: Endonuclease MutS2 (757 aa).

321-328 (GPNMGGKT) provides a ligand contact to ATP. The Smr domain occupies 681–756 (IDIRGMTVEE…GTGVTVVEVK (76 aa)).

It belongs to the DNA mismatch repair MutS family. MutS2 subfamily. As to quaternary structure, homodimer. Binds to stalled ribosomes, contacting rRNA.

In terms of biological role, endonuclease that is involved in the suppression of homologous recombination and thus may have a key role in the control of bacterial genetic diversity. Functionally, acts as a ribosome collision sensor, splitting the ribosome into its 2 subunits. Detects stalled/collided 70S ribosomes which it binds and splits by an ATP-hydrolysis driven conformational change. Acts upstream of the ribosome quality control system (RQC), a ribosome-associated complex that mediates the extraction of incompletely synthesized nascent chains from stalled ribosomes and their subsequent degradation. Probably generates substrates for RQC. The polypeptide is Endonuclease MutS2 (Thermotoga petrophila (strain ATCC BAA-488 / DSM 13995 / JCM 10881 / RKU-1)).